Here is a 420-residue protein sequence, read N- to C-terminus: Transcriptional regulator Myc-B (420 aa).

Positions 78-86 (EMVTEFLGG) match the 9aaTAD motif. 3 disordered regions span residues 141–181 (ALST…LQDP), 203–275 (ASSP…HHSP), and 319–345 (SNNR…NVLE). Over residues 143–160 (STSQCQSQPPQSPLKSPS) the composition is skewed to low complexity. Residues 161-172 (CDGSLNLGGTNR) show a composition bias toward polar residues. Acidic residues predominate over residues 225-246 (ESEDEQEDDDDDEDCDEEEEID). The span at 249 to 262 (TVEKRQTASRRMES) shows a compositional bias: basic and acidic residues. Positions 319-329 (SNNRKCASPRS) are enriched in polar residues. The 53-residue stretch at 336 to 388 (DKRRTHNVLERQRRNELKLSFFALRDQVPRWRNNEKAPKVVILKKATEYAISM) folds into the bHLH domain. Residues 395–416 (LIRETEQLKYRKEQLKQRLQQL) are leucine-zipper.

In terms of assembly, efficient DNA binding requires dimerization with another bHLH protein. Binds DNA as a heterodimer with MAX.

The protein localises to the nucleus. Transcription factor that binds DNA in a non-specific manner, yet also specifically recognizes the core sequence 5'-CAC[GA]TG-3'. Activates the transcription of growth-related genes. The sequence is that of Transcriptional regulator Myc-B (myc-b) from Xenopus laevis (African clawed frog).